A 59-amino-acid chain; its full sequence is UPF0509 protein KPK_3153 (59 aa).

The protein belongs to the UPF0509 family.

This is UPF0509 protein KPK_3153 from Klebsiella pneumoniae (strain 342).